The chain runs to 122 residues: NADH-quinone oxidoreductase subunit A (122 aa).

3 helical membrane-spanning segments follow: residues 10-30 (MIVG…LTLG), 66-86 (IFAL…PWAV), and 91-111 (LGLF…IGLA).

The protein belongs to the complex I subunit 3 family. In terms of assembly, NDH-1 is composed of 14 different subunits. Subunits NuoA, H, J, K, L, M, N constitute the membrane sector of the complex.

It is found in the cell membrane. The enzyme catalyses a quinone + NADH + 5 H(+)(in) = a quinol + NAD(+) + 4 H(+)(out). Functionally, NDH-1 shuttles electrons from NADH, via FMN and iron-sulfur (Fe-S) centers, to quinones in the respiratory chain. The immediate electron acceptor for the enzyme in this species is believed to be a menaquinone. Couples the redox reaction to proton translocation (for every two electrons transferred, four hydrogen ions are translocated across the cytoplasmic membrane), and thus conserves the redox energy in a proton gradient. The protein is NADH-quinone oxidoreductase subunit A of Bacillus cytotoxicus (strain DSM 22905 / CIP 110041 / 391-98 / NVH 391-98).